Consider the following 89-residue polypeptide: Small ribosomal subunit protein uS15 (89 aa).

This sequence belongs to the universal ribosomal protein uS15 family. Part of the 30S ribosomal subunit. Forms a bridge to the 50S subunit in the 70S ribosome, contacting the 23S rRNA.

In terms of biological role, one of the primary rRNA binding proteins, it binds directly to 16S rRNA where it helps nucleate assembly of the platform of the 30S subunit by binding and bridging several RNA helices of the 16S rRNA. Forms an intersubunit bridge (bridge B4) with the 23S rRNA of the 50S subunit in the ribosome. In Paramagnetospirillum magneticum (strain ATCC 700264 / AMB-1) (Magnetospirillum magneticum), this protein is Small ribosomal subunit protein uS15.